A 347-amino-acid chain; its full sequence is tRNA N6-adenosine threonylcarbamoyltransferase (347 aa).

Residues H117 and H121 each coordinate Fe cation. Substrate is bound by residues 140 to 144 (LVSGG), D173, G186, and N280. D308 contributes to the Fe cation binding site.

Belongs to the KAE1 / TsaD family. Fe(2+) is required as a cofactor.

It localises to the cytoplasm. The catalysed reaction is L-threonylcarbamoyladenylate + adenosine(37) in tRNA = N(6)-L-threonylcarbamoyladenosine(37) in tRNA + AMP + H(+). In terms of biological role, required for the formation of a threonylcarbamoyl group on adenosine at position 37 (t(6)A37) in tRNAs that read codons beginning with adenine. Is involved in the transfer of the threonylcarbamoyl moiety of threonylcarbamoyl-AMP (TC-AMP) to the N6 group of A37, together with TsaE and TsaB. TsaD likely plays a direct catalytic role in this reaction. The chain is tRNA N6-adenosine threonylcarbamoyltransferase from Psychrobacter sp. (strain PRwf-1).